We begin with the raw amino-acid sequence, 141 residues long: MLMPRKPPKGFRKPHHPDRSGASKGGNRVVFGEFGIQALEPAYVTNRQIESARIAMTRHIKRGGKVWITIFPDQALTKKPAETRMGSGKGSPEWWVANVKPGRVLFEMSFPNEQIAREAMRRAIHKLPMKCRIVTREVGES.

Positions methionine 1–histidine 16 are enriched in basic residues. Residues methionine 1–asparagine 27 form a disordered region.

The protein belongs to the universal ribosomal protein uL16 family. Part of the 50S ribosomal subunit.

Its function is as follows. Binds 23S rRNA and is also seen to make contacts with the A and possibly P site tRNAs. The protein is Large ribosomal subunit protein uL16 of Salinispora arenicola (strain CNS-205).